The following is a 995-amino-acid chain: tRNA wybutosine-synthesizing protein 2/3/4 (995 aa).

A tRNA wybutosine-synthesizing protein 3 homolog region spans residues 1-212 (MDFEKRKAAT…GFSVALASNG (212 aa)). Kelch repeat units follow at residues 284–335 (EVIV…MVGD), 336–386 (FMFV…SVGT), 387–436 (KVYI…AYGS), 437–486 (QSFM…VYKH), and 488–535 (IGII…SILG). A tRNA wybutosine-synthesizing protein 2 homolog region spans residues 661-995 (ERSEENNLTK…RHLVADVRCR (335 aa)). Residues K828 and 896-897 (DN) contribute to the S-adenosyl-L-methionine site.

It in the C-terminal section; belongs to the class I-like SAM-binding methyltransferase superfamily. TRM5/TYW2 family. This sequence in the N-terminal section; belongs to the TYW3 family.

The enzyme catalyses 4-demethyl-7-[(3S)-3-amino-3-carboxypropyl]wyosine(37) in tRNA(Phe) + S-adenosyl-L-methionine = 7-[(3S)-3-amino-3-carboxypropyl]wyosine(37) in tRNA(Phe) + S-adenosyl-L-homocysteine + H(+). The catalysed reaction is 4-demethylwyosine(37) in tRNA(Phe) + S-adenosyl-L-methionine = 4-demethyl-7-[(3S)-3-amino-3-carboxypropyl]wyosine(37) in tRNA(Phe) + S-methyl-5'-thioadenosine + H(+). The protein operates within tRNA modification; wybutosine-tRNA(Phe) biosynthesis. Functionally, S-adenosyl-L-methionine-dependent transferase that acts as a component of the wybutosine biosynthesis pathway. Wybutosine is a hyper modified guanosine with a tricyclic base found at the 3'-position adjacent to the anticodon of eukaryotic phenylalanine tRNA. This is tRNA wybutosine-synthesizing protein 2/3/4 from Arabidopsis thaliana (Mouse-ear cress).